Reading from the N-terminus, the 271-residue chain is Short chain dehydrogenase virK (271 aa).

7 residues coordinate NADP(+): Leu13, Asp59, Asn87, Tyr168, Lys172, Val201, and Thr203. Catalysis depends on Tyr168, which acts as the Proton donor. Lys172 functions as the Lowers pKa of active site Tyr in the catalytic mechanism.

The protein belongs to the short-chain dehydrogenases/reductases (SDR) family.

Its pathway is secondary metabolite biosynthesis. Short chain dehydrogenase; part of the gene cluster that mediates the biosynthesis of virensols and trichoxide, fungal natural products that contain or are derived from a salicylaldehyde core. The pathway begins with the synthesis of the reduced chain in virensol C by the highly reducing polyketide synthase virA via condensation of one acetate and 8 malonate units. VirA has interesting programming rules since the first 2 ketides are fully reduced, the 3 following ketides undergo beta-dehydration, and the last 3 ketides are only reduced to beta-hydroxys to yield the trihydroxy portion. The production of aldehyde virensol C by virA alone is surprising, since virA does not contain a reductase (R) domain that is typically associated with reductive product release in HRPKS. The cupin-domain enzyme virC is involved in enhancing virA product turnover. The short-chain dehydrogenase virB then oxidizes the C-7 alcohol of virensol C to a ketone, yielding virensol D. Virensol D is further transformed to salicylaldehyde 5-deoxyaurocitrin by the short-chain dehydrogenase virD. VirD catalyzes the dehydrogenation of C-3 to form the beta-ketone aldehyde, which is followed by the generation of the nucleophilic C-2 that is required for the intramolecular aldol condensation between C-2 and C-7, itself followed by dehydration and aromatization which leads to salicylaldehyde 5-deoxyaurocitrin. While the dehydrogenation of virensol D is definitely catalyzed by virD, the aldol condensation and dehydration may be uncatalyzed or assisted by virD. The short chain dehydrogenase virG then converts salicylaldehyde 5-deoxyaurocitrin into virensol B which is further hydroxylated by the cytochrome P450 monooxygenase virE to yield the hydroquinone virensol A. VirI then may oxidize virensol A to form the quinone, while virH performs the epoxidation. Finally, the two remaining short-chain dehydrogenases, virK and virL, are probably responsible for reducing the ketones to the corresponding alcohols to furnish the epoxycyclohexanol structure in trichoxide. This Hypocrea virens (strain Gv29-8 / FGSC 10586) (Gliocladium virens) protein is Short chain dehydrogenase virK.